The chain runs to 455 residues: Probable galactarate/D-glucarate transporter GudP (455 aa).

Helical transmembrane passes span 19-39 (WFIV…RATL), 59-79 (YVFS…GWLL), 87-107 (IIAL…AIGF), 108-128 (FSAG…GLSE), 153-173 (AFFN…MGWL), 177-197 (FGWH…AVIW), 253-273 (IGVY…LTWF), 289-309 (GFVA…GGIV), 320-340 (LTFA…SMIV), 348-368 (WLVV…ALGW), 386-406 (LFNT…GYIV), and 414-434 (GALV…LLLV).

It belongs to the major facilitator superfamily. Phthalate permease family.

It is found in the cell membrane. The catalysed reaction is galactarate(in) + H(+)(in) = galactarate(out) + H(+)(out). It carries out the reaction D-glucarate(in) + H(+)(in) = D-glucarate(out) + H(+)(out). Its function is as follows. Probably involved in the uptake of galactarate and/or D-glucarate. The polypeptide is Probable galactarate/D-glucarate transporter GudP (Bacillus subtilis (strain 168)).